Reading from the N-terminus, the 224-residue chain is Cytidylate kinase (224 aa).

11–19 (GPAAAGKST) contacts ATP.

This sequence belongs to the cytidylate kinase family. Type 1 subfamily.

The protein resides in the cytoplasm. The catalysed reaction is CMP + ATP = CDP + ADP. The enzyme catalyses dCMP + ATP = dCDP + ADP. This chain is Cytidylate kinase, found in Geobacillus sp. (strain WCH70).